A 294-amino-acid polypeptide reads, in one-letter code: Ribosomal protein L11 methyltransferase (294 aa).

Residues Thr-146, Gly-167, Asp-189, and Asn-231 each coordinate S-adenosyl-L-methionine.

This sequence belongs to the methyltransferase superfamily. PrmA family.

Its subcellular location is the cytoplasm. The catalysed reaction is L-lysyl-[protein] + 3 S-adenosyl-L-methionine = N(6),N(6),N(6)-trimethyl-L-lysyl-[protein] + 3 S-adenosyl-L-homocysteine + 3 H(+). In terms of biological role, methylates ribosomal protein L11. This chain is Ribosomal protein L11 methyltransferase, found in Aliivibrio salmonicida (strain LFI1238) (Vibrio salmonicida (strain LFI1238)).